A 308-amino-acid polypeptide reads, in one-letter code: D-alanine--D-alanine ligase B (308 aa).

Residues 102 to 302 enclose the ATP-grasp domain; it reads KKIVKTVGVP…FGELLSWMVE (201 aa). Residue 128 to 183 participates in ATP binding; sequence PMKPPYVIKPVNEGSSFGVVIVSEGQSHPPQVVGSSEWKYGDTVMVERYIHGRELT. Mg(2+) contacts are provided by aspartate 252, glutamate 269, and asparagine 271.

It belongs to the D-alanine--D-alanine ligase family. The cofactor is Mg(2+). It depends on Mn(2+) as a cofactor.

It is found in the cytoplasm. It carries out the reaction 2 D-alanine + ATP = D-alanyl-D-alanine + ADP + phosphate + H(+). It participates in cell wall biogenesis; peptidoglycan biosynthesis. Functionally, cell wall formation. In Mesorhizobium japonicum (strain LMG 29417 / CECT 9101 / MAFF 303099) (Mesorhizobium loti (strain MAFF 303099)), this protein is D-alanine--D-alanine ligase B.